The following is a 272-amino-acid chain: Protein SSO0103 (272 aa).

This sequence belongs to the CinA family.

The sequence is that of Protein SSO0103 from Saccharolobus solfataricus (strain ATCC 35092 / DSM 1617 / JCM 11322 / P2) (Sulfolobus solfataricus).